The sequence spans 204 residues: MKIGLLGTKLGMTQIFDDNGSAIPVTILKVGPCYVTNLKSDTKDNYNAIQIGYQQVDAKKLTKPQLGHLQVNNLPPLKHLKEYKVDATHTFTIAQQLDVSIFELGQIVSVSGVSIGKGFAGTVKRHNFTRGPMTHGSKNHREPGSIGQGSTPAKVHKGKKMAGRLGGHQVTTKNLTVVHLDKDNNVLVLKGCVPGKRGNILSIK.

Residues 126 to 155 form a disordered region; it reads HNFTRGPMTHGSKNHREPGSIGQGSTPAKV.

The protein belongs to the universal ribosomal protein uL3 family. Part of the 50S ribosomal subunit.

The protein localises to the plastid. The protein resides in the chloroplast. Its function is as follows. One of the primary rRNA binding proteins, it binds directly near the 3'-end of the 23S rRNA, where it nucleates assembly of the 50S subunit. The polypeptide is Large ribosomal subunit protein uL3c (rpl3) (Guillardia theta (Cryptophyte)).